The following is a 99-amino-acid chain: Large ribosomal subunit protein bL21 (99 aa).

It belongs to the bacterial ribosomal protein bL21 family. As to quaternary structure, part of the 50S ribosomal subunit. Contacts protein L20.

Functionally, this protein binds to 23S rRNA in the presence of protein L20. This chain is Large ribosomal subunit protein bL21, found in Mesomycoplasma hyopneumoniae (strain 7448) (Mycoplasma hyopneumoniae).